Consider the following 395-residue polypeptide: Outer membrane protein assembly factor BamB (395 aa).

The first 20 residues, 1–20 (MKSWCKNLLAAGLSLAMLSA), serve as a signal peptide directing secretion. Residue Cys21 is the site of N-palmitoyl cysteine attachment. Cys21 carries S-diacylglycerol cysteine lipidation.

The protein belongs to the BamB family. As to quaternary structure, part of the Bam complex.

The protein localises to the cell outer membrane. Part of the outer membrane protein assembly complex, which is involved in assembly and insertion of beta-barrel proteins into the outer membrane. The protein is Outer membrane protein assembly factor BamB of Shewanella oneidensis (strain ATCC 700550 / JCM 31522 / CIP 106686 / LMG 19005 / NCIMB 14063 / MR-1).